The sequence spans 282 residues: Elongation factor Ts (282 aa).

Positions 80–83 are involved in Mg(2+) ion dislocation from EF-Tu; the sequence is TDFV.

It belongs to the EF-Ts family.

The protein localises to the cytoplasm. In terms of biological role, associates with the EF-Tu.GDP complex and induces the exchange of GDP to GTP. It remains bound to the aminoacyl-tRNA.EF-Tu.GTP complex up to the GTP hydrolysis stage on the ribosome. The polypeptide is Elongation factor Ts (tsf) (Pasteurella multocida (strain Pm70)).